The sequence spans 149 residues: Small ribosomal subunit protein uS19 (149 aa).

It belongs to the universal ribosomal protein uS19 family.

Functionally, protein S19 forms a complex with S13 that binds strongly to the 16S ribosomal RNA. This is Small ribosomal subunit protein uS19 from Methanopyrus kandleri (strain AV19 / DSM 6324 / JCM 9639 / NBRC 100938).